The following is a 211-amino-acid chain: Probable septum site-determining protein MinC (211 aa).

The protein belongs to the MinC family. As to quaternary structure, interacts with MinD and FtsZ.

Its function is as follows. Cell division inhibitor that blocks the formation of polar Z ring septums. Rapidly oscillates between the poles of the cell to destabilize FtsZ filaments that have formed before they mature into polar Z rings. Prevents FtsZ polymerization. This Clostridium perfringens (strain 13 / Type A) protein is Probable septum site-determining protein MinC.